A 340-amino-acid chain; its full sequence is Ferredoxin--NADP reductase (340 aa).

Residues D33, Q41, Y46, A86, F120, D286, and T327 each contribute to the FAD site.

It belongs to the ferredoxin--NADP reductase type 2 family. Homodimer. FAD serves as cofactor.

The enzyme catalyses 2 reduced [2Fe-2S]-[ferredoxin] + NADP(+) + H(+) = 2 oxidized [2Fe-2S]-[ferredoxin] + NADPH. This chain is Ferredoxin--NADP reductase, found in Rickettsia rickettsii (strain Iowa).